The chain runs to 286 residues: MQNKIDYKNIKKIGLVTRPNVSLDKEILKLQSILSIYKVELVLLKESSEILDLPKYGLDDLFKISDFVISLGGDGTLISLCRKACEYDKAVLGIHAGHLGFLTDFKVDEAENFFQAFFQGEFRIEKPYLLSIFLEDRQGKILEKLAFNDVVISKNNQASMAHIEVFRKEKKFNEYFGDGLIVATPAGSTAYNLSANGPIVYTLAQAFILTPVCSHSLTQRPIVLPKGFEIEIMAKDCMLCIDGQENYKMNDFKSIKVGLSDKNVALIHPKNRDYFQILKEKLHWGN.

Residue aspartate 74 is the Proton acceptor of the active site. NAD(+) contacts are provided by residues 74 to 75, 148 to 149, aspartate 178, alanine 186, 189 to 194, and glutamine 244; these read DG, ND, and TAYNLS.

Belongs to the NAD kinase family. A divalent metal cation serves as cofactor.

The protein localises to the cytoplasm. It carries out the reaction NAD(+) + ATP = ADP + NADP(+) + H(+). Involved in the regulation of the intracellular balance of NAD and NADP, and is a key enzyme in the biosynthesis of NADP. Catalyzes specifically the phosphorylation on 2'-hydroxyl of the adenosine moiety of NAD to yield NADP. This chain is NAD kinase, found in Campylobacter jejuni subsp. jejuni serotype O:2 (strain ATCC 700819 / NCTC 11168).